Consider the following 1094-residue polypeptide: Probable arabinosyltransferase C (1094 aa).

13 helical membrane passes run 28–50 (IARY…TPLL), 232–251 (AAMI…LHIL), 264–286 (PARW…WWHF), 341–360 (SIWM…WVIS), 373–392 (TSRA…WLPL), 431–453 (IGAL…LVAI), 466–488 (RFGV…IPIF), 530–552 (SIAR…AMSL), 565–582 (SRRI…MMFT), 586–608 (WTHH…AVAV), 620–642 (TVFA…GWWY), 657–679 (WRWS…AAWF), and 700–722 (LAGI…EVVS). Low complexity predominate over residues 817–831 (GSEPGTEGGTTAAPG). A disordered region spans residues 817–836 (GSEPGTEGGTTAAPGINGSR).

The protein belongs to the emb family.

The protein localises to the cell membrane. In terms of biological role, arabinosyl transferase responsible for the polymerization of arabinose into the arabinan of arabinogalactan. In Mycobacterium bovis (strain ATCC BAA-935 / AF2122/97), this protein is Probable arabinosyltransferase C (embC).